Reading from the N-terminus, the 349-residue chain is Aspartate carbamoyltransferase catalytic subunit (349 aa).

Positions 59 and 60 each coordinate carbamoyl phosphate. Lys87 contributes to the L-aspartate binding site. Carbamoyl phosphate is bound by residues Arg109, His142, and Gln145. Arg182 and Arg253 together coordinate L-aspartate. 2 residues coordinate carbamoyl phosphate: Gly294 and Pro295.

It belongs to the aspartate/ornithine carbamoyltransferase superfamily. ATCase family. Heterododecamer (2C3:3R2) of six catalytic PyrB chains organized as two trimers (C3), and six regulatory PyrI chains organized as three dimers (R2).

The catalysed reaction is carbamoyl phosphate + L-aspartate = N-carbamoyl-L-aspartate + phosphate + H(+). It participates in pyrimidine metabolism; UMP biosynthesis via de novo pathway; (S)-dihydroorotate from bicarbonate: step 2/3. Catalyzes the condensation of carbamoyl phosphate and aspartate to form carbamoyl aspartate and inorganic phosphate, the committed step in the de novo pyrimidine nucleotide biosynthesis pathway. The chain is Aspartate carbamoyltransferase catalytic subunit from Synechococcus sp. (strain CC9605).